A 96-amino-acid chain; its full sequence is Co-chaperonin GroES (96 aa).

It belongs to the GroES chaperonin family. Heptamer of 7 subunits arranged in a ring. Interacts with the chaperonin GroEL.

The protein resides in the cytoplasm. Functionally, together with the chaperonin GroEL, plays an essential role in assisting protein folding. The GroEL-GroES system forms a nano-cage that allows encapsulation of the non-native substrate proteins and provides a physical environment optimized to promote and accelerate protein folding. GroES binds to the apical surface of the GroEL ring, thereby capping the opening of the GroEL channel. The protein is Co-chaperonin GroES of Actinobacillus pleuropneumoniae serotype 7 (strain AP76).